A 397-amino-acid chain; its full sequence is Fractalkine (397 aa).

A signal peptide spans 1 to 24; the sequence is MAPISLSWLLRLATFCHLTVLLAG. The interval 25-100 is chemokine and involved in interaction with ITGAV:ITGB3 and ITGA4:ITGB1; the sequence is QHHGVTKCNI…RQAAALTRNG (76 aa). The Extracellular portion of the chain corresponds to 25-341; it reads QHHGVTKCNI…PDAQAATRRQ (317 aa). Disulfide bonds link Cys32–Cys58 and Cys36–Cys74. Asn33 carries N-linked (GlcNAc...) asparagine glycosylation. A mucin-like stalk region spans residues 101–341; the sequence is GTFEKQIGEV…PDAQAATRRQ (241 aa). Disordered regions lie at residues 128 to 265 and 289 to 309; these read EPEA…REEM and VPVSSEGTPSREPVASGSWTP. The segment covering 133-147 has biased composition (polar residues); the sequence is GESSSLEPTPSSQEA. Residue Thr183 is glycosylated (O-linked (GalNAc...) threonine). The segment covering 193–202 has biased composition (polar residues); the sequence is TAATWQSSAP. The span at 219–243 shows a compositional bias: low complexity; it reads PSTQDPSTQASTASSPAPEENAPSE. O-linked (GalNAc...) serine glycosylation is present at Ser253. A glycan (O-linked (GalNAc...) threonine) is linked at Thr329. A helical membrane pass occupies residues 342–362; it reads AVGLLAFLGLLFCLGVAMFTY. At 363–397 the chain is on the cytoplasmic side; that stretch reads QSLQGCPRKMAGEMAEGLRYIPRSCGSNSYVLVPV.

This sequence belongs to the intercrine delta family. As to quaternary structure, monomer. Forms a ternary complex with CX3CR1 and ITGAV:ITGB3 or ITGA4:ITGB1. In terms of assembly, (Microbial infection) Interacts with pox virus crmD; this inhibits cell migration mediated by CX3CL1. (Microbial infection) Interacts (via N-terminus) with human cytomegalovirus (HHV-5) US28. As to quaternary structure, (Microbial infection) Interacts with P.falciparum (strain 3D7) CBP1 and CBP2 (via their extracellular domains); the interaction mediates the adhesion of infected erythrocytes with endothelial cells. A soluble short 95 kDa form may be released by proteolytic cleavage from the long membrane-anchored form. In terms of processing, O-glycosylated with core 1 or possibly core 8 glycans. As to expression, expressed in the seminal plasma, endometrial fluid and follicular fluid (at protein level). Small intestine, colon, testis, prostate, heart, brain, lung, skeletal muscle, kidney and pancreas. Most abundant in the brain and heart.

Its subcellular location is the cell membrane. The protein resides in the secreted. Chemokine that acts as a ligand for both CX3CR1 and integrins ITGAV:ITGB3 and ITGA4:ITGB1. The CX3CR1-CX3CL1 signaling exerts distinct functions in different tissue compartments, such as immune response, inflammation, cell adhesion and chemotaxis. Regulates leukocyte adhesion and migration processes at the endothelium. Can activate integrins in both a CX3CR1-dependent and CX3CR1-independent manner. In the presence of CX3CR1, activates integrins by binding to the classical ligand-binding site (site 1) in integrins. In the absence of CX3CR1, binds to a second site (site 2) in integrins which is distinct from site 1 and enhances the binding of other integrin ligands to site 1. Functionally, the soluble form is chemotactic for T-cells and monocytes, but not for neutrophils. In terms of biological role, the membrane-bound form promotes adhesion of those leukocytes to endothelial cells. Its function is as follows. (Microbial infection) Mediates the cytoadherence of erythrocytes infected with parasite P.falciparum (strain 3D7) with endothelial cells by interacting with P.falciparum CBP1 and CBP2 expressed at the surface of erythrocytes. The adhesion prevents the elimination of infected erythrocytes by the spleen. This chain is Fractalkine, found in Homo sapiens (Human).